The sequence spans 351 residues: Peptide chain release factor 1 (351 aa).

Gln229 carries the N5-methylglutamine modification. The disordered stretch occupies residues 279–300 (ADAERAADRKSQVGSGDRSERI).

This sequence belongs to the prokaryotic/mitochondrial release factor family. Post-translationally, methylated by PrmC. Methylation increases the termination efficiency of RF1.

Its subcellular location is the cytoplasm. Its function is as follows. Peptide chain release factor 1 directs the termination of translation in response to the peptide chain termination codons UAG and UAA. The polypeptide is Peptide chain release factor 1 (Paracoccus denitrificans (strain Pd 1222)).